The sequence spans 226 residues: MSTVLVVGADKGIAHSISRQLHDRGEDVIAACLFDGADLAAAGITVEPGVDVTSQESVEALAARLSEKGVKLDAVFHVAGVMWLDEVGSLDYDLIRRQIEINTLGPLRTIEAVRPLLNEGAKVGIVTSRVGSLGDNTSGGMYSYRISKAAANMVGLNFHHDLSKDGVSVLLLHPGMVATDLTKDFPGEHSYITPEQAAAGLIKNIDNLTPETSGRFQHSDGTFLQW.

Belongs to the short-chain dehydrogenases/reductases (SDR) family.

The enzyme catalyses 2-glutathionyl-2-methylbut-3-en-1-ol + 2 NAD(+) + H2O = 2-glutathionyl-2-methylbut-3-enoate + 2 NADH + 3 H(+). The catalysed reaction is 2-glutathionyl-2-methylbut-3-en-1-ol + NAD(+) = 2-glutathionyl-2-methylbut-3-enal + NADH + H(+). It catalyses the reaction 2-glutathionyl-2-methylbut-3-enal + NAD(+) + H2O = 2-glutathionyl-2-methylbut-3-enoate + NADH + 2 H(+). Its function is as follows. Involved in isoprene degradation. Catalyzes the two-step NAD(+)-dependent oxidation of 2-glutathionyl-2-methylbut-3-en-1-ol (HGMB) to 2-glutathionyl-2-methylbut-3-enoate (GMBA). The protein is 1-hydroxy-2-glutathionyl-2-methyl-3-butene dehydrogenase of Rhodococcus sp. (strain AD45).